Consider the following 60-residue polypeptide: Large ribosomal subunit protein bL32 (60 aa).

A compositionally biased stretch (basic residues) spans 1–20 (MAVQKSRKSRSRRDMRRSHH). A disordered region spans residues 1-22 (MAVQKSRKSRSRRDMRRSHHRM).

The protein belongs to the bacterial ribosomal protein bL32 family.

In Psychrobacter arcticus (strain DSM 17307 / VKM B-2377 / 273-4), this protein is Large ribosomal subunit protein bL32.